The sequence spans 380 residues: Protein GOLM2 (380 aa).

Residue Met1 is modified to N-acetylmethionine. At 1–14 the chain is on the cytoplasmic side; that stretch reads MVGFGANRRAGRLP. The chain crosses the membrane as a helical; Signal-anchor for type II membrane protein span at residues 15–35; it reads SLVLAVLLVVIAVLAFNYWSI. Residues 35–195 adopt a coiled-coil conformation; the sequence is ISSRHVLLQE…QFLQEQKQEA (161 aa). The Lumenal portion of the chain corresponds to 36 to 380; it reads SSRHVLLQEE…YGKQRFNDAL (345 aa). Basic and acidic residues-rich tracts occupy residues 192 to 212 and 227 to 247; these read KQEA…DNHA and KNEE…KRGG. Residues 192–254 are disordered; sequence KQEAHKFESK…RGGDAGMPGI (63 aa). Residues Ser233 and Ser275 each carry the phosphoserine modification. A disordered region spans residues 280-380; sequence ESHQVISHLP…YGKQRFNDAL (101 aa). Polar residues predominate over residues 305 to 321; sequence NHNGNSRTSKQNPSNPL. Positions 344 to 380 are enriched in basic and acidic residues; the sequence is ATKDRAGDFHKLKQNDEERELQMDPADYGKQRFNDAL.

It belongs to the GOLM family.

Its subcellular location is the membrane. This chain is Protein GOLM2 (GOLM2), found in Bos taurus (Bovine).